The following is a 507-amino-acid chain: Probable Xaa-Pro aminopeptidase TRV_02643 (507 aa).

The Mn(2+) site is built by aspartate 275, aspartate 286, glutamate 434, and glutamate 478.

This sequence belongs to the peptidase M24B family. Requires Mn(2+) as cofactor.

It carries out the reaction Release of any N-terminal amino acid, including proline, that is linked to proline, even from a dipeptide or tripeptide.. Functionally, catalyzes the removal of a penultimate prolyl residue from the N-termini of peptides. The polypeptide is Probable Xaa-Pro aminopeptidase TRV_02643 (Trichophyton verrucosum (strain HKI 0517)).